The chain runs to 353 residues: Protein RecA (353 aa).

65 to 72 (GPESSGKT) provides a ligand contact to ATP. The span at 334–345 (DAERAGAEREDN) shows a compositional bias: basic and acidic residues. A disordered region spans residues 334–353 (DAERAGAEREDNAAADDENF).

This sequence belongs to the RecA family.

The protein resides in the cytoplasm. Can catalyze the hydrolysis of ATP in the presence of single-stranded DNA, the ATP-dependent uptake of single-stranded DNA by duplex DNA, and the ATP-dependent hybridization of homologous single-stranded DNAs. It interacts with LexA causing its activation and leading to its autocatalytic cleavage. This is Protein RecA from Edwardsiella ictaluri (strain 93-146).